The following is a 5146-amino-acid chain: SCO-spondin (5146 aa).

Positions 1–17 (MLLPALLFGAAWALANG) are cleaved as a signal peptide. In terms of domain architecture, EMI spans 18–94 (RWCEQTETVL…ACCPGWGGTH (77 aa)). N-linked (GlcNAc...) asparagine glycosylation is found at Asn80, Asn122, and Asn153. The region spanning 185–356 (ATCATWSGFH…RLPDSELGCL (172 aa)) is the VWFD 1 domain. 3 disulfide bridges follow: Cys187–Cys317, Cys209–Cys355, and Cys231–Cys237. N-linked (GlcNAc...) asparagine glycosylation occurs at Asn255. Positions 464–519 (CPGGQLYSDCASACPPSCSAVGEGSEWSCGEECVSGCECPPGLFWDGALCVPAARC) constitute a TIL 1 domain. One can recognise a VWFD 2 domain in the interval 557–730 (AECAVGGDGH…FQVAGGGTCS (174 aa)). 2 disulfides stabilise this stretch: Cys559–Cys692 and Cys583–Cys729. N-linked (GlcNAc...) asparagine glycosylation is present at Asn814. The TIL 2 domain maps to 822–875 (CPGGQEYQECAPACDRNCGEPEDCGELDNCVAGCNCPLGLLWDPEGQCVPPNLC). Asn906 carries an N-linked (GlcNAc...) asparagine glycan. The VWFD 3 domain maps to 1008–1178 (GRCRASGAPH…HSWRLGPLCP (171 aa)). 3 cysteine pairs are disulfide-bonded: Cys1010–Cys1142, Cys1032–Cys1177, and Cys1053–Cys1060. In terms of domain architecture, TIL 3 spans 1271 to 1327 (CERGQVYEACGPTCPATCHDHRPEPGWPCRAVACVEGCFCPEGTLLHGGVCLEPAAC). N-linked (GlcNAc...) asparagine glycosylation occurs at Asn1349. 6 consecutive LDL-receptor class A domains span residues 1372 to 1409 (GCAE…EGCA), 1412 to 1447 (VCGE…EQGC), 1448 to 1484 (PCPQ…ESCL), 1488 to 1526 (DCAP…GHCP), 1561 to 1597 (PCGP…SGCD), and 1599 to 1638 (PCAP…GACE). 18 disulfides stabilise this stretch: Cys1373–Cys1386, Cys1380–Cys1399, Cys1393–Cys1408, Cys1413–Cys1425, Cys1420–Cys1438, Cys1432–Cys1447, Cys1449–Cys1461, Cys1456–Cys1474, Cys1468–Cys1483, Cys1489–Cys1501, Cys1496–Cys1514, Cys1508–Cys1525, Cys1562–Cys1574, Cys1569–Cys1587, Cys1581–Cys1596, Cys1600–Cys1613, Cys1607–Cys1626, and Cys1620–Cys1637. A glycan (N-linked (GlcNAc...) asparagine) is linked at Asn1647. The 39-residue stretch at 1652 to 1690 (PCPEYSCPDGLCIGFQQVCDGQPDCELAGTAGPSPEEQG) folds into the LDL-receptor class A 7 domain. TSP type-1 domains lie at 1691–1745 (CGAW…AACP) and 1747–1805 (DGVW…DGCP). Cystine bridges form between Cys1703/Cys1739, Cys1707/Cys1744, and Cys1718/Cys1729. The N-linked (GlcNAc...) asparagine glycan is linked to Asn1806. One can recognise a TIL 4 domain in the interval 1809 to 1865 (CSGELVFHACVPCPLTCDDISGQATCPPDRPCGGPGCWCPAGQVLGAQGRCVWPRQC). 2 EGF-like domains span residues 1821-1860 (CPLT…GRCV) and 1861-1898 (WPRQ…RRCQ). A TSP type-1 3 domain is found at 1906 to 1962 (NCGWSAWSPWAECLGPCGSRSVQWSFRSPNNPRPAGRGHQCRGLHRKARRCQTEPCE). 3 cysteine pairs are disulfide-bonded: Cys1907-Cys1946, Cys1918-Cys1922, and Cys1956-Cys1961. The VWFC 1 domain maps to 1962–2022 (EGCEQDGRVH…GVGESCCHCV (61 aa)). 2 N-linked (GlcNAc...) asparagine glycosylation sites follow: Asn2027 and Asn2127. 4 cysteine pairs are disulfide-bonded: Cys2062–Cys2220, Cys2226–Cys2238, Cys2233–Cys2251, and Cys2245–Cys2260. The region spanning 2062–2220 (CYSPLGLARL…GPLRVELLGC (159 aa)) is the F5/8 type C domain. Residues 2225 to 2261 (LCLGVGHRCVSGECAPRGAPCDGVEDCKDGSDEEGCV) form the LDL-receptor class A 8 domain. The tract at residues 2262-2346 (TPPAGAGRIE…TPTSQPEAQA (85 aa)) is disordered. 2 stretches are compositionally biased toward polar residues: residues 2273-2284 (TAWSSAPSSAQP) and 2331-2343 (GSVQ…SQPE). LDL-receptor class A domains are found at residues 2382 to 2418 (QCSP…RPCA) and 2442 to 2478 (LCSP…NGCV). Intrachain disulfides connect Cys2383–Cys2395, Cys2390–Cys2408, Cys2402–Cys2417, Cys2443–Cys2455, Cys2450–Cys2468, Cys2462–Cys2477, Cys2480–Cys2516, Cys2491–Cys2495, Cys2526–Cys2531, Cys2546–Cys2583, Cys2550–Cys2588, and Cys2561–Cys2573. 2 consecutive TSP type-1 domains span residues 2479–2532 (DCGL…QACP) and 2534–2589 (AGAW…QPCA). The region spanning 2611-2654 (VPPCPPSCLDPEANRSCSGLCLEGCRCPPGLLLQDAGCLPLSEC) is the TIL 5 domain. N-linked (GlcNAc...) asparagine glycans are attached at residues Asn2624 and Asn2673. TSP type-1 domains are found at residues 2694–2748 (PCGW…SACG), 2751–2807 (VPGW…PVCL), and 2809–2862 (LGVW…QPCT). Intrachain disulfides connect Cys2695–Cys2733, Cys2706–Cys2710, Cys2743–Cys2747, Cys2763–Cys2801, Cys2767–Cys2806, Cys2783–Cys2791, Cys2821–Cys2856, Cys2825–Cys2861, and Cys2836–Cys2846. 2 N-linked (GlcNAc...) asparagine glycosylation sites follow: Asn2915 and Asn2946. 2 consecutive TSP type-1 domains span residues 2964 to 3019 (ACGW…RPCG) and 3020 to 3071 (GPAG…GVCP). Disulfide bonds link Cys2965/Cys3003, Cys2976/Cys2980, and Cys3013/Cys3018. N-linked (GlcNAc...) asparagine glycosylation occurs at Asn3041. Residues 3070–3122 (CPPGKRWLDCAQGPASCAELSAPRGADQPCHPGCYCPSGMLLLNNACVPTQDC) form the TIL 6 domain. 2 N-linked (GlcNAc...) asparagine glycosylation sites follow: Asn3143 and Asn3153. 2 consecutive TSP type-1 domains span residues 3163–3230 (QPTW…PECD) and 3232–3287 (AGGW…LPCP). Disulfide bonds link Cys3175-Cys3224, Cys3179-Cys3229, Cys3190-Cys3214, Cys3244-Cys3281, Cys3248-Cys3286, and Cys3259-Cys3271. An N-linked (GlcNAc...) asparagine glycan is attached at Asn3290. The TIL 7 domain occupies 3295–3345 (EGAEYSACGPPCPRSCDDLVHCVWHCQPGCYCPPGQVLSADGTVHVQPGHC). TSP type-1 domains lie at 3388 to 3450 (PGAW…PECP) and 3452 to 3507 (DGAW…TQCT). Disulfide bonds link Cys3400–Cys3443, Cys3404–Cys3449, Cys3415–Cys3427, Cys3464–Cys3499, Cys3467–Cys3506, and Cys3477–Cys3489. 3 N-linked (GlcNAc...) asparagine glycosylation sites follow: Asn3502, Asn3580, and Asn3607. The TSP type-1 15 domain maps to 3626-3674 (LGLWGSWGPWEDCSVSCGGGEQLRFRRCPRPPCPGPARQSRTCRTQVCR). 3 disulfide bridges follow: Cys3638/Cys3668, Cys3642/Cys3673, and Cys3653/Cys3658. An N-linked (GlcNAc...) asparagine glycan is attached at Asn3783. TSP type-1 domains are found at residues 3802–3858 (AGGF…PECP), 3872–3924 (PGGW…PSCT), 3938–3994 (NCSW…RACP), and 3996–4051 (PGGW…TPCE). Disulfide bonds link Cys3814-Cys3852, Cys3818-Cys3857, and Cys3830-Cys3842. Asn3906 and Asn3938 each carry an N-linked (GlcNAc...) asparagine glycan. 6 disulfide bridges follow: Cys3939-Cys3975, Cys3950-Cys3954, Cys3988-Cys3993, Cys4008-Cys4045, Cys4012-Cys4050, and Cys4023-Cys4035. Positions 4054-4109 (CPAGMEVVSCANRCPRRCSDLQEGIVCQEDQACQQGCRCPEGSLEQDGGCVPLGHC) constitute a TIL 8 domain. The VWFC 2 domain occupies 4101 to 4168 (GGCVPLGHCE…AWSPCSRSCG (68 aa)). A glycan (N-linked (GlcNAc...) asparagine) is linked at Asn4131. 4 consecutive TSP type-1 domains span residues 4151–4204 (HCAW…SPCP), 4245–4300 (LGAW…WPCP), 4302–4358 (LPDT…GPCL), and 4360–4414 (ECVW…GNCS). Disulfide bonds link Cys4152/Cys4188, Cys4163/Cys4167, Cys4198/Cys4203, Cys4257/Cys4294, Cys4261/Cys4299, and Cys4272/Cys4284. An N-linked (GlcNAc...) asparagine glycan is attached at Asn4341. Cystine bridges form between Cys4361/Cys4398, Cys4372/Cys4374, and Cys4408/Cys4413. Asn4412 carries an N-linked (GlcNAc...) asparagine glycan. Residues 4418–4473 (CAPPFEFQACGSPCTGLCATYLSPWLCQDLPPCQPGCYCPEGLLEQAGGCVPPEQC) form the TIL 9 domain. Positions 4610 to 4661 (LCQWGPWGAWSPCQVPCSGGFRLRWREAGIPPGGGCRGPWAQTESCNMGPCP) constitute a TSP type-1 24 domain. Disulfide bonds link Cys4611–Cys4645, Cys4622–Cys4626, and Cys4655–Cys4660. In terms of domain architecture, TIL 10 spans 4675-4721 (DCANQCPRSCVDLWDRVECLQGPCRPGCRCPPGQLVQDGHCVPVSSC). Residues Asn4729, Asn4746, Asn4751, and Asn4772 are each glycosylated (N-linked (GlcNAc...) asparagine). Residues 4761-4814 (CPTLGPWSAWSNCSAPCGGGTTKRHRSCKEGPGVTPCQAQDMEQQQDCNLQPCP) enclose the TSP type-1 25 domain. Disulfide bonds link Cys4773–Cys4808, Cys4777–Cys4813, and Cys4788–Cys4797. The region spanning 4816–4870 (CPPGQVLSACAVSCPRLCSHLQPGTPCMQEPCQLGCDCPRGQLLHNGTCVPPAEC) is the TIL 11 domain. N-linked (GlcNAc...) asparagine glycans are attached at residues Asn4861, Asn4901, Asn4947, and Asn4954. Residues 4983 to 5041 (CECWHHGRPHPPGSEWQKACESCRCVSGESICTQHCPPLTCAQGETAVQEPGGCCPTCR) form the VWFC 3 domain. Intrachain disulfides connect Cys5052-Cys5100, Cys5066-Cys5117, Cys5076-Cys5133, and Cys5080-Cys5135. The 88-residue stretch at 5052–5139 (CRHLTELRNL…IHSCQCSACQ (88 aa)) folds into the CTCK domain. The N-linked (GlcNAc...) asparagine glycan is linked to Asn5060.

This sequence belongs to the thrombospondin family. As to expression, subcommissural organ. Located at the boundary of the diencephalon and mesencephalon beneath the posterior commissure at the point where the axons cross the midline.

It localises to the secreted. The protein resides in the extracellular space. Involved in the modulation of neuronal aggregation. May be involved in developmental events during the formation of the central nervous system. The protein is SCO-spondin (SSPO) of Bos taurus (Bovine).